A 278-amino-acid polypeptide reads, in one-letter code: Ferredoxin--NADP reductase A (278 aa).

The FAD-binding FR-type domain occupies 3–103 (PGYTEETVLE…KRATGTLTIG (101 aa)). FAD contacts are provided by residues 52-55 (RAYS) and Thr-118.

It belongs to the ferredoxin--NADP reductase type 1 family. Requires FAD as cofactor.

The catalysed reaction is 2 reduced [4Fe-4S]-[ferredoxin] + NADP(+) + H(+) = 2 oxidized [4Fe-4S]-[ferredoxin] + NADPH. Its function is as follows. Transports electrons between NADPH and ferredoxin. Can transfer electrons to ferredoxins Fdx2 and Fdx8. Prefers NADPH to NADH. The sequence is that of Ferredoxin--NADP reductase A from Sorangium cellulosum (strain So ce56) (Polyangium cellulosum (strain So ce56)).